A 236-amino-acid chain; its full sequence is 3-oxoacyl-[acyl-carrier-protein] reductase (236 aa).

M1 is subject to N-acetylmethionine. NADP(+)-binding positions include 11–14 and 34–35; these read SRGI and RN. K40 bears the N6-acetyllysine mark. Position 83-85 (83-85) interacts with NADP(+); the sequence is AAG. K96 bears the N6-acetyllysine mark. Position 134 (S134) interacts with substrate. Residues Y147, K151, and 180–182 each bind NADP(+); that span reads IHT. The active-site Proton acceptor is the Y147. N6-acetyllysine is present on K194.

The protein belongs to the short-chain dehydrogenases/reductases (SDR) family. Homotetramer (in vitro). Heterotetramer with HSD17B8; contains two molecules each of HSD17B8 and CBR4. Does not form homotetramers when HSD17B8 is coexpressed, only heterotetramers (in vitro).

Its subcellular location is the mitochondrion matrix. The enzyme catalyses a (3R)-hydroxyacyl-[ACP] + NADP(+) = a 3-oxoacyl-[ACP] + NADPH + H(+). It carries out the reaction a quinone + NADPH + H(+) = a quinol + NADP(+). Its pathway is lipid metabolism; fatty acid biosynthesis. Component of the heterotetramer complex KAR (3-ketoacyl-[acyl carrier protein] reductase or 3-ketoacyl-[ACP] reductase) that forms part of the mitochondrial fatty acid synthase (mtFAS). Beta-subunit of the KAR heterotetramer complex, responsible for the 3-ketoacyl-ACP reductase activity of the mtFAS, reduces 3-oxoacyl-[ACP] to (3R)-hydroxyacyl-[ACP] in a NADPH-dependent manner with no chain length preference, thereby participating in mitochondrial fatty acid biosynthesis. The homotetramer has NADPH-dependent quinone reductase activity (in vitro), hence could play a role in protection against cytotoxicity of exogenous quinones. As a heterotetramer, it can also reduce 9,10-phenanthrenequinone, 1,4-benzoquinone and various other o-quinones and p-quinones (in vitro). The protein is 3-oxoacyl-[acyl-carrier-protein] reductase (Cbr4) of Rattus norvegicus (Rat).